A 712-amino-acid chain; its full sequence is MRVLLHLPALLASLILLQAAASTTRAQTTRTSAISDTVSQAKVQVNKAFLDSRTRLKTAMSSETPTSRQLSEYLKHAKGRTRTAIRNGQVWEESLKRLRQKASLTNVTDPSLDLTSLSLEVGCGAPAPVVRCDPCSPYRTITGDCNNRRKPALGAANRALARWLPAEYEDGLSLPFGWTPGKTRNGFPLPLAREVSNKIVGYLNEEGVLDQNRSLLFMQWGQIVDHDLDFAPDTELGSSEYSKAQCDEYCIQGDNCFPIMFPPNDPKAGTQGKCMPFFRAGFVCPTPPYKSLAREQINALTSFLDASFVYSSEPSLASRLRNLSSPLGLMAVNQEVSDHGLPYLPYDSKKPSPCEFINTTARVPCFLAGDSRASEHILLATSHTLFLREHNRLARELKRLNPQWDGEKLYQEARKILGAFVQIITFRDYLPILLGDHMQKWIPPYQGYSESVDPRISNVFTFAFRFGHLEVPSSMFRLDENYQPWGPEPELPLHTLFFNTWRMVKDGGIDPLVRGLLAKKSKLMKQNKMMTGELRNKLFQPTHRIHGFDLAAINTQRCRDHGQPGYNSWRAFCDLSQPQTLEELNTVLKSKMLAKKLLGLYGTPDNIDIWIGAIAEPLVERGRVGPLLACLLGKQFQQIRDGDRFWWENPGVFTNEQKDSLQKMSFSRLVCDNTRITKVPRDPFWANSYPYDFVDCSAIDKLDLSPWASVKN.

Residues 1–26 form the signal peptide; sequence MRVLLHLPALLASLILLQAAASTTRA. The propeptide occupies 27 to 80; sequence QTTRTSAISDTVSQAKVQVNKAFLDSRTRLKTAMSSETPTSRQLSEYLKHAKGR. An N-linked (GlcNAc...) asparagine glycan is attached at N106. C132 and C145 are oxidised to a cystine. N-linked (GlcNAc...) asparagine glycosylation is present at N212. A heme b-binding site is contributed by D225. Residue H226 is the Proton acceptor of the active site. Residue D227 coordinates Ca(2+). Intrachain disulfides connect C246/C256 and C250/C274. T301, F303, D305, and S307 together coordinate Ca(2+). S315 is modified (phosphoserine). N-linked (GlcNAc...) asparagine glycans are attached at residues N322 and N358. C354 and C365 are oxidised to a cystine. Heme b-binding residues include E375 and H468. Position 482 is a 3'-nitrotyrosine (Y482). 2 disulfides stabilise this stretch: C573-C630 and C671-C696.

This sequence belongs to the peroxidase family. XPO subfamily. Ca(2+) serves as cofactor. Requires heme b as cofactor. Mammary gland, milk and salivary gland. Found in bronchial submucosal glands.

The protein localises to the secreted. The protein resides in the cytoplasm. It catalyses the reaction 2 a phenolic donor + H2O2 = 2 a phenolic radical donor + 2 H2O. The catalysed reaction is thiocyanate + H2O2 + H(+) = hypothiocyanous acid + H2O. It carries out the reaction iodide + H2O2 = hypoiodite + H2O. In terms of biological role, heme-containing oxidoreductase which catalyzes the conversion of thiocyanate (SCN(-)) into antimicrobial agent hypothiocyanous acid (OSCN(-)) in the presence of hydrogen peroxide (H2O2). Also involved in the conversion of iodide (I(-)) into hypoiodite (IO(-)) in the presence of H2O2. Responsible for the inactivation of a wide range of micro-organisms and hence, important component of defense mechanism. Shows antibacterial properties against Pseudomonas aeruginosa. The lactoperoxidase-SCN(-)-H2O2 system shows antibacterial properties against Burkholderia cepacia and Haemophilus influenzae in vitro. Present in mammary and salivary gland secretions and may contribute to airway host defense against infection. May contribute to maintaining an appropriate H2O2 cellular level, therefore protecting cells from H2O2-caused injuries and inflammation. The chain is Lactoperoxidase from Homo sapiens (Human).